The primary structure comprises 197 residues: Guanylate kinase (197 aa).

Ser-2 is modified (N-acetylserine). Positions 4 to 186 (PRPVVLSGPS…AYAELKEALS (183 aa)) constitute a Guanylate kinase-like domain. 14 to 19 (GAGKST) contributes to the ATP binding site. 37-51 (SHTTRNPRPGEENGK) is a substrate binding site. Active-site residues include Arg-44, Arg-137, and Arg-148. Arg-137 is a binding site for ATP. Residue 171–172 (ND) participates in ATP binding.

This sequence belongs to the guanylate kinase family. In terms of assembly, monomer. Interacts with RD3. Widely expressed.

It localises to the photoreceptor inner segment. The protein localises to the cytoplasm. Its subcellular location is the cytosol. It is found in the mitochondrion. It catalyses the reaction GMP + ATP = GDP + ADP. Up-regulated by RD3. Functionally, catalyzes the phosphorylation of GMP to GDP. Essential enzyme for recycling GMP and indirectly, cyclic GMP (cGMP). Involved in the cGMP metabolism in photoreceptors. It may also have a role in the survival and growth progression of some tumors. In addition to its physiological role, GUK1 is essential for converting prodrugs used for the treatment of cancers and viral infections into their pharmacologically active metabolites, most notably acyclovir, ganciclovir, and 6-thioguanine and its closely related analog 6-mercaptopurine. This chain is Guanylate kinase, found in Homo sapiens (Human).